Consider the following 307-residue polypeptide: Methionyl-tRNA formyltransferase (307 aa).

108-111 serves as a coordination point for (6S)-5,6,7,8-tetrahydrofolate; that stretch reads SLLP.

Belongs to the Fmt family.

The catalysed reaction is L-methionyl-tRNA(fMet) + (6R)-10-formyltetrahydrofolate = N-formyl-L-methionyl-tRNA(fMet) + (6S)-5,6,7,8-tetrahydrofolate + H(+). Its function is as follows. Attaches a formyl group to the free amino group of methionyl-tRNA(fMet). The formyl group appears to play a dual role in the initiator identity of N-formylmethionyl-tRNA by promoting its recognition by IF2 and preventing the misappropriation of this tRNA by the elongation apparatus. This is Methionyl-tRNA formyltransferase from Xanthomonas euvesicatoria pv. vesicatoria (strain 85-10) (Xanthomonas campestris pv. vesicatoria).